A 199-amino-acid polypeptide reads, in one-letter code: Peroxiredoxin-1 (199 aa).

Serine 2 carries the N-acetylserine modification. A Thioredoxin domain is found at 6–165 (AKIGHRAPQF…TLRLVQAFQF (160 aa)). Lysine 7 bears the N6-acetyllysine; alternate mark. Lysine 7 participates in a covalent cross-link: Glycyl lysine isopeptide (Lys-Gly) (interchain with G-Cter in SUMO2); alternate. N6-acetyllysine is present on residues lysine 16 and lysine 27. Lysine 35 carries the N6-acetyllysine; alternate modification. Lysine 35 is modified (N6-succinyllysine; alternate). The active-site Cysteine sulfenic acid (-SOH) intermediate is the cysteine 52. Threonine 90 carries the phosphothreonine modification. Lysine 120 is covalently cross-linked (Glycyl lysine isopeptide (Lys-Gly) (interchain with G-Cter in SUMO2)). N6-acetyllysine is present on lysine 136. The interval 176–199 (GWKPGSDTIKPDVQKSKEYFSKQK) is disordered. A compositionally biased stretch (basic and acidic residues) spans 184–199 (IKPDVQKSKEYFSKQK). A Glycyl lysine isopeptide (Lys-Gly) (interchain with G-Cter in SUMO1) cross-link involves residue lysine 185. An N6-acetyllysine modification is found at lysine 197.

It belongs to the peroxiredoxin family. AhpC/Prx1 subfamily. Homodimer; disulfide-linked, upon oxidation. 5 homodimers assemble to form a ring-like decamer. Interacts with GDPD5; forms a mixed-disulfide with GDPD5. Interacts with SESN1 and SESN2. Interacts with FAM107A. In terms of processing, phosphorylated on Thr-90 during the M-phase, which leads to a decrease in enzymatic activity. Post-translationally, acetylation increases reducing activity and resistance to superoxidation. Deacetylated by HDAC6 which decreases reducing activity.

It localises to the cytoplasm. The catalysed reaction is a hydroperoxide + [thioredoxin]-dithiol = an alcohol + [thioredoxin]-disulfide + H2O. In terms of biological role, thiol-specific peroxidase that catalyzes the reduction of hydrogen peroxide and organic hydroperoxides to water and alcohols, respectively. Plays a role in cell protection against oxidative stress by detoxifying peroxides and as sensor of hydrogen peroxide-mediated signaling events. Might participate in the signaling cascades of growth factors and tumor necrosis factor-alpha by regulating the intracellular concentrations of H(2)O(2). Reduces an intramolecular disulfide bond in GDPD5 that gates the ability to GDPD5 to drive postmitotic motor neuron differentiation. The chain is Peroxiredoxin-1 (PRDX1) from Bos taurus (Bovine).